A 349-amino-acid chain; its full sequence is Secretory carrier-associated membrane protein 3 (349 aa).

Residues 1–90 (MAQSRDTGNP…EPRNYGSYST (90 aa)) form a disordered region. The Cytoplasmic segment spans residues 1–168 (MAQSRDTGNP…PQEFQKTVST (168 aa)). The residue at position 32 (serine 32) is a Phosphoserine. Threonine 37 is modified (phosphothreonine). Phosphotyrosine is present on residues tyrosine 41 and tyrosine 53. The segment covering 49 to 68 (PPPAYEPPAPAPAPLPPPSA) has biased composition (pro residues). Residues serine 74 and serine 78 each carry the phosphoserine modification. Tyrosine 85 carries the phosphotyrosine modification. Serine 87 bears the Phosphoserine mark. 4 helical membrane passes run 169 to 189 (MYYLWMCSTLALLLNFFACLA), 200 to 220 (GFGLSMLWLLLFTPCSFVCWY), 236 to 256 (FVFFFIFFVQDVFFVLQAIGI), and 277 to 297 (VAVLMLLVALLFTGIAVLGIV). Topologically, residues 298 to 349 (MLKRIHSLYRQTGASFQKAQQEFAAGVFSNPAVRTAAANAAAGAAENAFRAP) are cytoplasmic. Lysine 315 is covalently cross-linked (Glycyl lysine isopeptide (Lys-Gly) (interchain with G-Cter in SUMO1)).

It belongs to the SCAMP family. Interacts with NEDD4 and NEDD4L and TSG101. Interacts with RNF126. Monoubiquitinated.

It is found in the membrane. Functionally, functions in post-Golgi recycling pathways. Acts as a recycling carrier to the cell surface. This Mus musculus (Mouse) protein is Secretory carrier-associated membrane protein 3 (Scamp3).